The following is a 168-amino-acid chain: MPGPECKWSTTETGAPCGTDDSSGRLAPVFVYGTLKTGQPNHRVLLDGAHGRAAFRGRAHTLEPYPLVIAGEHNIPRLLNLPGRGHRVFGEVYEVDERMLRFLDEFESCPDMYQRTRLHVALEGVRGPLECFVYTTATYPPEWVHLPYLDDYDSQGKHGLRYNPRENR.

Residues Met-1 to Asp-20 are disordered. Tyr-32–Leu-35 contacts substrate. Glu-107 acts as the Proton acceptor in catalysis.

It belongs to the gamma-glutamylcyclotransferase family. Monomer.

It carries out the reaction epsilon-(gamma-L-glutamyl)-L-lysine = 5-oxo-L-proline + L-lysine. Contributes to degradation of proteins cross-linked by transglutaminases by degrading the cross-link between a lysine and a glutamic acid residue. Catalyzes the formation of 5-oxo-L-proline from L-gamma-glutamyl-L-epsilon-lysine. Inactive with L-gamma-glutamyl-alpha-amino acid substrates such as L-gamma-glutamyl-L-alpha-cysteine and L-gamma-glutamyl-L-alpha-alanine. In Bos taurus (Bovine), this protein is Gamma-glutamylaminecyclotransferase (GGACT).